The sequence spans 527 residues: Tyrosine-protein kinase TXK (527 aa).

A disordered region spans residues 35–79 (DEELPEKYTQRRRPWLSQLSNKKQSNTGRVQPSKRKPLPPLPPSE). Over residues 51–64 (SQLSNKKQSNTGRV) the composition is skewed to polar residues. A Nuclear localization signal motif is present at residues 68–73 (KRKPLP). An SH3 domain is found at 82–142 (EEKIQVKALY…PSNYVTENKI (61 aa)). Phosphotyrosine; by autocatalysis is present on Tyr-91. Residues 150–246 (WYHRNITRNQ…GLMTRLRYPV (97 aa)) enclose the SH2 domain. Residues 271–527 (LAFIKEIGSG…RAVTEIAETW (257 aa)) enclose the Protein kinase domain. ATP-binding positions include 277-285 (IGSGQFGVV) and Lys-299. Asp-390 acts as the Proton acceptor in catalysis. Tyr-420 is modified (phosphotyrosine; by FYN and autocatalysis).

This sequence belongs to the protein kinase superfamily. Tyr protein kinase family. TEC subfamily. In terms of assembly, interacts with PARP1 and EEF1A1. Interacts with SH2D2A. Interacts with FYN. In terms of processing, phosphorylated at Tyr-420 by FYN. Autophosphorylation at Tyr-91 is critical for the activation of TXK, leading to the up-regulation of IFN-gamma gene transcription. Post-translationally, the cysteine string at the N-terminus is palmitoylated and required for the proper subcellular location. As to expression, expressed in T-cells and some myeloid cell lines. Expressed in Th1/Th0 cells with IFN-gamma-producing potential.

It is found in the cytoplasm. It localises to the nucleus. The protein localises to the cell membrane. It carries out the reaction L-tyrosyl-[protein] + ATP = O-phospho-L-tyrosyl-[protein] + ADP + H(+). Activated by phosphorylation by FYN. Functionally, non-receptor tyrosine kinase that plays a redundant role with ITK in regulation of the adaptive immune response. Regulates the development, function and differentiation of conventional T-cells and nonconventional NKT-cells. When antigen presenting cells (APC) activate T-cell receptor (TCR), a series of phosphorylation leads to the recruitment of TXK to the cell membrane, where it is phosphorylated at Tyr-420. Phosphorylation leads to TXK full activation. Also contributes to signaling from many receptors and participates in multiple downstream pathways, including regulation of the actin cytoskeleton. Like ITK, can phosphorylate PLCG1, leading to its localization in lipid rafts and activation, followed by subsequent cleavage of its substrates. In turn, the endoplasmic reticulum releases calcium in the cytoplasm and the nuclear activator of activated T-cells (NFAT) translocates into the nucleus to perform its transcriptional duty. Plays a role in the positive regulation of IFNG transcription in T-helper 1 cells as part of an IFNG promoter-binding complex with PARP1 and EEF1A1. Within the complex, phosphorylates both PARP1 and EEF1A1. Also phosphorylates key sites in LCP2 leading to the up-regulation of Th1 preferred cytokine IL-2. Phosphorylates 'Tyr-201' of CTLA4 which leads to the association of PI-3 kinase with the CTLA4 receptor. The polypeptide is Tyrosine-protein kinase TXK (TXK) (Homo sapiens (Human)).